A 510-amino-acid polypeptide reads, in one-letter code: Adenosine deaminase 2 (510 aa).

Positions 1–24 (MSGWPVLPALLLAVAMSSFHSATS) are cleaved as a signal peptide. The segment at 25–95 (RDEERNRLLM…GLMEKSAVFN (71 aa)) is dimerization. Zn(2+) contacts are provided by H107 and H109. Position 110 (D110) interacts with substrate. A glycan (N-linked (GlcNAc...) asparagine) is linked at N122. Residues 122 to 182 (NATYRPYCYF…TEFDNSLLRT (61 aa)) are PRB domain. C132 and C156 are disulfide-bonded. N171 is a glycosylation site (N-linked (GlcNAc...) asparagine). Residues 201 to 208 (WKKFKTIF), H290, and G323 each bind substrate. A Zn(2+)-binding site is contributed by H353. The active-site Proton donor is the E356. N-linked (GlcNAc...) asparagine glycosylation is present at N375. H381 acts as the Proton acceptor in catalysis. Residue D438 participates in Zn(2+) binding. A substrate-binding site is contributed by D439.

The protein belongs to the metallo-dependent hydrolases superfamily. Adenosine and AMP deaminases family. ADGF subfamily. Homodimer. Interacts with adenosine receptors. Binds heparin. Zn(2+) serves as cofactor.

It localises to the secreted. The catalysed reaction is adenosine + H2O + H(+) = inosine + NH4(+). Its function is as follows. Adenosine deaminase that may contribute to the degradation of extracellular adenosine, a signaling molecule that controls a variety of cellular responses. Requires elevated adenosine levels for optimal enzyme activity. Binds to cell surfaces via proteoglycans and may play a role in the regulation of cell proliferation and differentiation, independently of its enzyme activity. The protein is Adenosine deaminase 2 of Sus scrofa (Pig).